Reading from the N-terminus, the 234-residue chain is Purine nucleoside phosphorylase DeoD-type (234 aa).

Residue His-5 coordinates a purine D-ribonucleoside. Residues Gly-21, Arg-25, Arg-44, and Arg-88 to Thr-91 contribute to the phosphate site. A purine D-ribonucleoside-binding positions include Asp-180–Glu-182 and Ser-204–Asp-205. Asp-205 serves as the catalytic Proton donor.

The protein belongs to the PNP/UDP phosphorylase family. As to quaternary structure, homohexamer; trimer of homodimers.

The enzyme catalyses a purine D-ribonucleoside + phosphate = a purine nucleobase + alpha-D-ribose 1-phosphate. It catalyses the reaction a purine 2'-deoxy-D-ribonucleoside + phosphate = a purine nucleobase + 2-deoxy-alpha-D-ribose 1-phosphate. In terms of biological role, catalyzes the reversible phosphorolytic breakdown of the N-glycosidic bond in the beta-(deoxy)ribonucleoside molecules, with the formation of the corresponding free purine bases and pentose-1-phosphate. The polypeptide is Purine nucleoside phosphorylase DeoD-type (Buchnera aphidicola subsp. Acyrthosiphon pisum (strain APS) (Acyrthosiphon pisum symbiotic bacterium)).